Reading from the N-terminus, the 537-residue chain is Asparagine-rich protein (537 aa).

Disordered stretches follow at residues 1-22, 187-254, 336-372, 399-479, and 509-528; these read YNNN…QNTN, NMNI…NNNF, YNNN…YGYD, LNNN…DDWG, and DLSK…MKKD. Composition is skewed to low complexity over residues 336 to 347 and 399 to 469; these read YNNNESNTANPN and LNNN…NQNN. Positions 470–479 are enriched in acidic residues; the sequence is NEDEDDDDWG. Basic and acidic residues predominate over residues 509 to 518; sequence DLSKKGNDGK.

The chain is Asparagine-rich protein from Plasmodium falciparum.